We begin with the raw amino-acid sequence, 161 residues long: Host protease inhibitor (161 aa).

Plays a role in the inhibition of bacterial toxin-antitoxin system by blocking the action of host Lon protease. This chain is Host protease inhibitor (pin), found in Enterobacteria phage T4 (Bacteriophage T4).